Reading from the N-terminus, the 4134-residue chain is DNA-dependent protein kinase catalytic subunit (4134 aa).

HEAT repeat units follow at residues 900–937 (VIYL…VAYM), 1000–1036 (QDTV…LKWS), and 1050–1085 (ANTK…YREF). TPR repeat units lie at residues 1265–1305 (YNTF…HDIH) and 1722–1755 (PMSS…SQSP). At Ser-2055 the chain carries Phosphoserine; by autocatalysis. The stretch at 2207-2240 (DEILANRLLEFLMKNAFHQKRAVFRHNLEIIKTV) is one TPR 3 repeat. Thr-2609 carries the phosphothreonine; by autocatalysis modification. The segment covering 2611–2629 (ASQSTNRNSSQERSLSISG) has biased composition (polar residues). Residues 2611–2631 (ASQSTNRNSSQERSLSISGSV) form a disordered region. The residue at position 2612 (Ser-2612) is a Phosphoserine; by autocatalysis. Residues Thr-2638 and Thr-2647 each carry the phosphothreonine; by autocatalysis modification. In terms of domain architecture, FAT spans 2880 to 3545 (NVSTSCLASL…IYPFTISSES (666 aa)). Positions 3728-4059 (FDERIMVLES…VSYVKRKLTG (332 aa)) constitute a PI3K/PI4K catalytic domain. The segment at 3734-3740 (VLESLRK) is G-loop. Residues 3925–3933 (GIGDRHLSN) form a catalytic loop region. The activation loop stretch occupies residues 3945–3970 (GIDFGHAFGSATQFLPVPELMPFRLT). The FATC domain maps to 4102 to 4134 (DRLSEETQVRCLIDQATDPNLLGRVWEGWEPWM).

The protein belongs to the PI3/PI4-kinase family. As to quaternary structure, DNA-PK is a heterotrimer of PRKDC and the Ku dimer (composed of XRCC6/Ku70 and XRCC5/Ku86). Component of the core long-range non-homologous end joining (NHEJ) complex (also named DNA-PK complex) composed of PRKDC, LIG4, XRCC4, XRCC6/Ku70, XRCC5/Ku86 and NHEJ1/XLF. Additional component of the NHEJ complex includes PAXX. Following autophosphorylation, PRKDC dissociates from DNA. Autophosphorylated at two clusters, the T2609 cluster and the S2056 cluster. Autophosphorylated on Ser-2055, Thr-2609, Thr-2638 and Thr-2647. Ser-2055 and Thr-2609 are DNA damage-inducible phosphorylation sites (inducible with ionizing radiation, IR) dephosphorylated by PPP5C. Autophosphorylation induces a conformational change that leads to remodeling of the DNA-PK complex, requisite for efficient end processing and DNA repair. Autophosphorylation in trans within DNA-PK complexes loaded on DNA ends leads to the dissociation of PRKDC from DNA and the transition into the short-range NHEJ complex. Autophosphorylation of the T2609 cluster is required for hematopoietic development and protein synthesis in erythrocytes precursors.

The protein localises to the nucleus. The protein resides in the nucleolus. The catalysed reaction is L-seryl-[protein] + ATP = O-phospho-L-seryl-[protein] + ADP + H(+). It carries out the reaction L-threonyl-[protein] + ATP = O-phospho-L-threonyl-[protein] + ADP + H(+). Its function is as follows. Serine/threonine-protein kinase that acts as a molecular sensor for DNA damage. Involved in DNA nonhomologous end joining (NHEJ) required for double-strand break (DSB) repair and V(D)J recombination. Must be bound to DNA to express its catalytic properties. Promotes processing of hairpin DNA structures in V(D)J recombination by activation of the hairpin endonuclease artemis (DCLRE1C). Recruited by XRCC5 and XRCC6 to DNA ends and is required to (1) protect and align broken ends of DNA, thereby preventing their degradation, (2) and sequester the DSB for repair by NHEJ. Acts as a scaffold protein to aid the localization of DNA repair proteins to the site of damage. The assembly of the DNA-PK complex at DNA ends is also required for the NHEJ ligation step. Found at the ends of chromosomes, suggesting a further role in the maintenance of telomeric stability and the prevention of chromosomal end fusion. As part of the DNA-PK complex, involved in the early steps of ribosome assembly by promoting the processing of precursor rRNA into mature 18S rRNA in the small-subunit processome. Recognizes the substrate consensus sequence [ST]-Q. Phosphorylates 'Ser-139' of histone variant H2AX, thereby regulating DNA damage response mechanism. The polypeptide is DNA-dependent protein kinase catalytic subunit (PRKDC) (Gallus gallus (Chicken)).